Here is a 128-residue protein sequence, read N- to C-terminus: Large ribosomal subunit protein bL12 (128 aa).

It belongs to the bacterial ribosomal protein bL12 family. As to quaternary structure, homodimer. Part of the ribosomal stalk of the 50S ribosomal subunit. Forms a multimeric L10(L12)X complex, where L10 forms an elongated spine to which 2 to 4 L12 dimers bind in a sequential fashion. Binds GTP-bound translation factors.

Functionally, forms part of the ribosomal stalk which helps the ribosome interact with GTP-bound translation factors. Is thus essential for accurate translation. This is Large ribosomal subunit protein bL12 from Acidithiobacillus ferrooxidans (strain ATCC 23270 / DSM 14882 / CIP 104768 / NCIMB 8455) (Ferrobacillus ferrooxidans (strain ATCC 23270)).